Here is a 43-residue protein sequence, read N- to C-terminus: Protein PsbN (43 aa).

The chain crosses the membrane as a helical span at residues 7–27 (LIVAIAAVTICITAFAIYTAF).

It belongs to the PsbN family.

The protein localises to the cellular thylakoid membrane. In terms of biological role, may play a role in photosystem I and II biogenesis. This is Protein PsbN from Synechococcus sp. (strain JA-2-3B'a(2-13)) (Cyanobacteria bacterium Yellowstone B-Prime).